A 361-amino-acid polypeptide reads, in one-letter code: Phosphoserine aminotransferase (361 aa).

Arginine 42 contributes to the L-glutamate binding site. Pyridoxal 5'-phosphate-binding positions include 76–77 (AT), tryptophan 102, threonine 152, aspartate 172, and glutamine 195. At lysine 196 the chain carries N6-(pyridoxal phosphate)lysine. Residue 237 to 238 (NT) coordinates pyridoxal 5'-phosphate.

This sequence belongs to the class-V pyridoxal-phosphate-dependent aminotransferase family. SerC subfamily. Homodimer. The cofactor is pyridoxal 5'-phosphate.

It is found in the cytoplasm. The enzyme catalyses O-phospho-L-serine + 2-oxoglutarate = 3-phosphooxypyruvate + L-glutamate. The catalysed reaction is 4-(phosphooxy)-L-threonine + 2-oxoglutarate = (R)-3-hydroxy-2-oxo-4-phosphooxybutanoate + L-glutamate. It functions in the pathway amino-acid biosynthesis; L-serine biosynthesis; L-serine from 3-phospho-D-glycerate: step 2/3. It participates in cofactor biosynthesis; pyridoxine 5'-phosphate biosynthesis; pyridoxine 5'-phosphate from D-erythrose 4-phosphate: step 3/5. Functionally, catalyzes the reversible conversion of 3-phosphohydroxypyruvate to phosphoserine and of 3-hydroxy-2-oxo-4-phosphonooxybutanoate to phosphohydroxythreonine. In Xanthomonas euvesicatoria pv. vesicatoria (strain 85-10) (Xanthomonas campestris pv. vesicatoria), this protein is Phosphoserine aminotransferase.